The following is a 1022-amino-acid chain: Leucine--tRNA ligase (1022 aa).

The 'HIGH' region motif lies at 47-57; that stretch reads PYPNSPMHLGH. The short motif at 697–701 is the 'KMSKS' region element; sequence KMSKS. Lys-700 is a binding site for ATP.

It belongs to the class-I aminoacyl-tRNA synthetase family.

The protein resides in the cytoplasm. The catalysed reaction is tRNA(Leu) + L-leucine + ATP = L-leucyl-tRNA(Leu) + AMP + diphosphate. The sequence is that of Leucine--tRNA ligase from Ignicoccus hospitalis (strain KIN4/I / DSM 18386 / JCM 14125).